The chain runs to 316 residues: Initiation factor TFIIB homolog (316 aa).

This sequence belongs to the asfivirus C315R family.

Functionally, putative initation factor. The chain is Initiation factor TFIIB homolog from Ornithodoros (relapsing fever ticks).